Consider the following 479-residue polypeptide: Glycine betaine methyltransferase (479 aa).

It belongs to the trimethylamine methyltransferase family.

The enzyme catalyses Co(I)-[glycine betaine-specific corrinoid protein] + glycine betaine + H(+) = methyl-Co(III)-[glycine betaine-specific corrinoid protein] + N,N-dimethylglycine. Methyltransferase able to methylate free cob(I)alamin in vitro, using glycine betaine as the methyl donor, yealding methylcobalamin (methylCbl) and dimethylglycine. In vivo, probably carries out the methylation of a corrinoid protein, likely the adjacently encoded DSY3155, with glycine betaine, to then supply methyl groups to tetrahydrofolate (THF) for ultimate conversion to carbon dioxide; oxidation of the methyl group would also provide reducing equivalents for anaerobic respiration. Thus, may function in the pathway that allows anaerobic methylotrophic growth of D.hafniense using glycine betaine. Cannot use quaternary amines such as carnitine and choline as substrates, nor tertiary amines such as dimethylglycine or trimethylamine. The protein is Glycine betaine methyltransferase of Desulfitobacterium hafniense (strain Y51).